Here is a 68-residue protein sequence, read N- to C-terminus: Tetrahydromethanopterin S-methyltransferase subunit F (68 aa).

A helical transmembrane segment spans residues 45–65 (IAIGFLLAVLLVGVPAMMSIL).

Belongs to the MtrF family. The complex is composed of 8 subunits; MtrA, MtrB, MtrC, MtrD, MtrE, MtrF, MtrG and MtrH.

It localises to the cell membrane. The enzyme catalyses 5-methyl-5,6,7,8-tetrahydromethanopterin + coenzyme M + 2 Na(+)(in) = 5,6,7,8-tetrahydromethanopterin + methyl-coenzyme M + 2 Na(+)(out). Its pathway is one-carbon metabolism; methanogenesis from CO(2); methyl-coenzyme M from 5,10-methylene-5,6,7,8-tetrahydromethanopterin: step 2/2. Its function is as follows. Part of a complex that catalyzes the formation of methyl-coenzyme M and tetrahydromethanopterin from coenzyme M and methyl-tetrahydromethanopterin. This is an energy-conserving, sodium-ion translocating step. This is Tetrahydromethanopterin S-methyltransferase subunit F (mtrF) from Methanothermobacter marburgensis (strain ATCC BAA-927 / DSM 2133 / JCM 14651 / NBRC 100331 / OCM 82 / Marburg) (Methanobacterium thermoautotrophicum).